A 127-amino-acid polypeptide reads, in one-letter code: UPF0325 protein VC_2264 (127 aa).

The protein belongs to the UPF0325 family.

The chain is UPF0325 protein VC_2264 from Vibrio cholerae serotype O1 (strain ATCC 39315 / El Tor Inaba N16961).